The chain runs to 114 residues: Large ribosomal subunit protein eL31 (114 aa).

This sequence belongs to the eukaryotic ribosomal protein eL31 family.

This chain is Large ribosomal subunit protein eL31 (RPL31), found in Eremothecium gossypii (strain ATCC 10895 / CBS 109.51 / FGSC 9923 / NRRL Y-1056) (Yeast).